Reading from the N-terminus, the 500-residue chain is Probable E3 ubiquitin-protein ligase ARI16 (500 aa).

Positions 74–288 (NSNSSSADRE…QGNWNCSPVA (215 aa)) are TRIAD supradomain. An RING-type 1 zinc finger spans residues 78–130 (SSADRETGDGDYLVSTPFCSHKFSTTCWSEYLSDALKKNKEQRGLISCLSQDC). Residues cysteine 96, histidine 98, cysteine 125, cysteine 130, cysteine 169, cysteine 174, cysteine 194, cysteine 196, cysteine 201, cysteine 204, histidine 209, cysteine 214, cysteine 241, cysteine 244, cysteine 261, cysteine 263, cysteine 268, cysteine 271, histidine 278, and cysteine 284 each contribute to the Zn(2+) site. The IBR-type zinc-finger motif lies at 148–214 (EMYENYILES…GLESHRPVSC (67 aa)). The segment at 241–271 (CPKCKIPVQQNGDPNYRLINCICSNNFCWIC) adopts an RING-type 2; atypical zinc-finger fold. A RanBP2-type zinc finger spans residues 453-483 (EPGSRWFCDRCTFENSWVDKQCKMCFFPLDY).

Belongs to the RBR family. Ariadne subfamily. It depends on Zn(2+) as a cofactor. As to expression, preferentially expressed in green siliques.

The catalysed reaction is [E2 ubiquitin-conjugating enzyme]-S-ubiquitinyl-L-cysteine + [acceptor protein]-L-lysine = [E2 ubiquitin-conjugating enzyme]-L-cysteine + [acceptor protein]-N(6)-ubiquitinyl-L-lysine.. It participates in protein modification; protein ubiquitination. Might act as an E3 ubiquitin-protein ligase, or as part of E3 complex, which accepts ubiquitin from specific E2 ubiquitin-conjugating enzymes and then transfers it to substrates. This is Probable E3 ubiquitin-protein ligase ARI16 (ARI16) from Arabidopsis thaliana (Mouse-ear cress).